The sequence spans 159 residues: uncharacterized protein (159 aa).

It is found in the mitochondrion. This is an uncharacterized protein from Arabidopsis thaliana (Mouse-ear cress).